The primary structure comprises 260 residues: Cytosolic Fe-S cluster assembly factor Nubp2 homolog (260 aa).

ATP is bound at residue 14-21; that stretch reads GKGGVGKS. [4Fe-4S] cluster-binding residues include cysteine 188 and cysteine 191.

This sequence belongs to the Mrp/NBP35 ATP-binding proteins family. NUBP2/CFD1 subfamily. As to quaternary structure, heterotetramer of 2 Nubp1 and 2 Nubp2 chains. [4Fe-4S] cluster is required as a cofactor.

It is found in the cytoplasm. Its function is as follows. Component of the cytosolic iron-sulfur (Fe/S) protein assembly (CIA) machinery. Required for maturation of extramitochondrial Fe-S proteins. The Nubp1-Nubp2 heterotetramer forms a Fe-S scaffold complex, mediating the de novo assembly of an Fe-S cluster and its transfer to target apoproteins. In Drosophila erecta (Fruit fly), this protein is Cytosolic Fe-S cluster assembly factor Nubp2 homolog.